We begin with the raw amino-acid sequence, 386 residues long: DNA replication and repair protein RecF (386 aa).

An ATP-binding site is contributed by 30 to 37; that stretch reads GSNGFGKT.

This sequence belongs to the RecF family.

Its subcellular location is the cytoplasm. Its function is as follows. The RecF protein is involved in DNA metabolism; it is required for DNA replication and normal SOS inducibility. RecF binds preferentially to single-stranded, linear DNA. It also seems to bind ATP. The polypeptide is DNA replication and repair protein RecF (Mycolicibacterium vanbaalenii (strain DSM 7251 / JCM 13017 / BCRC 16820 / KCTC 9966 / NRRL B-24157 / PYR-1) (Mycobacterium vanbaalenii)).